Consider the following 118-residue polypeptide: Small ribosomal subunit protein bS6 (118 aa).

Belongs to the bacterial ribosomal protein bS6 family.

Its function is as follows. Binds together with bS18 to 16S ribosomal RNA. The polypeptide is Small ribosomal subunit protein bS6 (Parabacteroides distasonis (strain ATCC 8503 / DSM 20701 / CIP 104284 / JCM 5825 / NCTC 11152)).